A 429-amino-acid polypeptide reads, in one-letter code: Histidine--tRNA ligase (429 aa).

The protein belongs to the class-II aminoacyl-tRNA synthetase family. In terms of assembly, homodimer.

It localises to the cytoplasm. The catalysed reaction is tRNA(His) + L-histidine + ATP = L-histidyl-tRNA(His) + AMP + diphosphate + H(+). This is Histidine--tRNA ligase from Streptococcus pneumoniae serotype 19F (strain G54).